The primary structure comprises 1280 residues: Clustered mitochondria protein homolog (1280 aa).

Polar residues predominate over residues 1–27; that stretch reads MAASSNDASKSAMANSNVTTEVAQTPS. Disordered regions lie at residues 1 to 49 and 169 to 189; these read MAAS…GQLP and GLDQSGKPKEDGPEQSPLADY. Residues 32–43 show a composition bias toward acidic residues; it reads VNGEVEATEEDG. In terms of domain architecture, Clu spans 338-582; it reads DLARTQESYL…RLTPLDVAWI (245 aa). Disordered regions lie at residues 633 to 669, 905 to 943, and 1214 to 1280; these read KANKARGGRRRLPKAQKKADAGKEVDGEKKAEAEPEQ, GAAVPTPAAPQTNGSSTSSKKKKNKTITPPRADSPAVSL, and TGRN…TQKP. The span at 635–648 shows a compositional bias: basic residues; that stretch reads NKARGGRRRLPKAQ. Over residues 649-669 the composition is skewed to basic and acidic residues; sequence KKADAGKEVDGEKKAEAEPEQ. Over residues 1221–1235 the composition is skewed to low complexity; the sequence is PAAATPSVSDAAAAA. Positions 1245–1261 are enriched in basic and acidic residues; the sequence is VDQRKIEDLLKYIEGES. A compositionally biased stretch (basic residues) spans 1265-1280; that stretch reads PTKKRTQNPRKRTQKP.

This sequence belongs to the CLU family. In terms of assembly, may associate with the eukaryotic translation initiation factor 3 (eIF-3) complex.

The protein resides in the cytoplasm. Its function is as follows. mRNA-binding protein involved in proper cytoplasmic distribution of mitochondria. This Phaeosphaeria nodorum (strain SN15 / ATCC MYA-4574 / FGSC 10173) (Glume blotch fungus) protein is Clustered mitochondria protein homolog.